A 426-amino-acid chain; its full sequence is MLDKDLILNDNTYELSQISRHKTHVVEVGKVKIGGNNPVVVQSMALGVHIDADNIKSSAKHYAKEITELARTGSELVRIALNSEEVARAIPYIVEEINKEGFDGKILVGCGQYELDKLVQDYPDNIKMLGKIRINPGNIGFGDKRDEKFERVIEYAIMHDLPVRIGVNWGSLDKYLLQKLMDENSSLSNSRPSDVILRKALVMSALDSAKKAEGIGLNSNKIIISCKVSKVQDLILVYMALAKSSNYALHLGLTEAGMGNKGVVNTAAGLTYLLQNGIGDTIRASLTQRPGESRTNEVVVCQEILQSIGLRYFNPQVNSCPGCGRTSSDRFRILTEEVNGYIKTHIPIWKKKNPGVEHMSIAVMGCIVNGPGESKHANLGISLPGYGEKPVSAVYKDGKYFKTLQGDNVSEEFKAIIDNYVKEHYT.

4 residues coordinate [4Fe-4S] cluster: cysteine 320, cysteine 323, cysteine 366, and glutamate 373.

Belongs to the IspG family. [4Fe-4S] cluster serves as cofactor.

The enzyme catalyses (2E)-4-hydroxy-3-methylbut-2-enyl diphosphate + oxidized [flavodoxin] + H2O + 2 H(+) = 2-C-methyl-D-erythritol 2,4-cyclic diphosphate + reduced [flavodoxin]. The protein operates within isoprenoid biosynthesis; isopentenyl diphosphate biosynthesis via DXP pathway; isopentenyl diphosphate from 1-deoxy-D-xylulose 5-phosphate: step 5/6. Converts 2C-methyl-D-erythritol 2,4-cyclodiphosphate (ME-2,4cPP) into 1-hydroxy-2-methyl-2-(E)-butenyl 4-diphosphate. The protein is 4-hydroxy-3-methylbut-2-en-1-yl diphosphate synthase (flavodoxin) of Wolbachia sp. subsp. Drosophila simulans (strain wRi).